Consider the following 172-residue polypeptide: Large ribosomal subunit protein uL10 (172 aa).

Belongs to the universal ribosomal protein uL10 family. As to quaternary structure, part of the ribosomal stalk of the 50S ribosomal subunit. The N-terminus interacts with L11 and the large rRNA to form the base of the stalk. The C-terminus forms an elongated spine to which L12 dimers bind in a sequential fashion forming a multimeric L10(L12)X complex.

Forms part of the ribosomal stalk, playing a central role in the interaction of the ribosome with GTP-bound translation factors. The sequence is that of Large ribosomal subunit protein uL10 from Pelodictyon phaeoclathratiforme (strain DSM 5477 / BU-1).